Consider the following 295-residue polypeptide: sn-glycerol-3-phosphate transport system permease protein UgpA (295 aa).

Residues 1–11 lie on the Cytoplasmic side of the membrane; the sequence is MSSSRPVFRSR. The helical transmembrane segment at 12–32 threads the bilayer; sequence WLPYLLVAPQLIITVIFFIWP. The Periplasmic segment spans residues 33 to 80; the sequence is AGEALWYSLQSVDPFGFSSQFVGLDNFVALFHDSYYIDSFWTTIKFST. Residues 76-284 enclose the ABC transmembrane type-1 domain; that stretch reads IKFSTFVTVS…FLVIVLTVVQ (209 aa). The chain crosses the membrane as a helical span at residues 81 to 101; sequence FVTVSGLLVSLFFAALVEYIV. Topologically, residues 102–109 are cytoplasmic; it reads RGSRFYQT. The helical transmembrane segment at 110–130 threads the bilayer; sequence LMLLPYAVAPAVAAVLWIFLF. Residues 131–156 are Periplasmic-facing; that stretch reads NPGRGLITHFLAEFGYDWNHAQNSGQ. A helical membrane pass occupies residues 157 to 177; it reads AMFLVVFASVWKQISYNFLFF. Over 178–207 the chain is Cytoplasmic; the sequence is YAALQSIPRSLIEAAAIDGVGPIRRFFKIA. Residues 208–228 form a helical membrane-spanning segment; sequence LPLIAPVSFFLLVVNLVYAFF. Residues 229–262 are Periplasmic-facing; it reads DTFPVIDAATSGGPVQAITTLIYKIYREGFTGLD. A helical membrane pass occupies residues 263 to 283; it reads LASSAAQSVVLMFLVIVLTVV. The Cytoplasmic portion of the chain corresponds to 284 to 295; the sequence is QFRYVESKVRYQ.

Belongs to the binding-protein-dependent transport system permease family. UgpAE subfamily. The complex is composed of two ATP-binding proteins (UgpC), two transmembrane proteins (UgpA and UgpE) and a solute-binding protein (UgpB).

The protein resides in the cell inner membrane. Its function is as follows. Part of the ABC transporter complex UgpBAEC involved in sn-glycerol-3-phosphate (G3P) import. Probably responsible for the translocation of the substrate across the membrane. This chain is sn-glycerol-3-phosphate transport system permease protein UgpA (ugpA), found in Shigella dysenteriae serotype 1 (strain Sd197).